The sequence spans 89 residues: Large ribosomal subunit protein bL28 (89 aa).

It belongs to the bacterial ribosomal protein bL28 family.

The chain is Large ribosomal subunit protein bL28 from Chlamydia muridarum (strain MoPn / Nigg).